Here is a 265-residue protein sequence, read N- to C-terminus: Indole-3-glycerol phosphate synthase (265 aa).

The protein belongs to the TrpC family.

The enzyme catalyses 1-(2-carboxyphenylamino)-1-deoxy-D-ribulose 5-phosphate + H(+) = (1S,2R)-1-C-(indol-3-yl)glycerol 3-phosphate + CO2 + H2O. Its pathway is amino-acid biosynthesis; L-tryptophan biosynthesis; L-tryptophan from chorismate: step 4/5. The chain is Indole-3-glycerol phosphate synthase from Xanthomonas oryzae pv. oryzae (strain PXO99A).